The primary structure comprises 250 residues: NAD(P)H-quinone oxidoreductase subunit K (250 aa).

[4Fe-4S] cluster is bound by residues Cys-60, Cys-61, Cys-125, and Cys-156. The tract at residues 230 to 250 (ELNTSEIDASPASQPSSTYES) is disordered. Residues 231–250 (LNTSEIDASPASQPSSTYES) show a composition bias toward polar residues.

It belongs to the complex I 20 kDa subunit family. NDH-1 can be composed of about 15 different subunits; different subcomplexes with different compositions have been identified which probably have different functions. [4Fe-4S] cluster is required as a cofactor.

It is found in the cellular thylakoid membrane. The enzyme catalyses a plastoquinone + NADH + (n+1) H(+)(in) = a plastoquinol + NAD(+) + n H(+)(out). It catalyses the reaction a plastoquinone + NADPH + (n+1) H(+)(in) = a plastoquinol + NADP(+) + n H(+)(out). Functionally, NDH-1 shuttles electrons from an unknown electron donor, via FMN and iron-sulfur (Fe-S) centers, to quinones in the respiratory and/or the photosynthetic chain. The immediate electron acceptor for the enzyme in this species is believed to be plastoquinone. Couples the redox reaction to proton translocation, and thus conserves the redox energy in a proton gradient. Cyanobacterial NDH-1 also plays a role in inorganic carbon-concentration. The sequence is that of NAD(P)H-quinone oxidoreductase subunit K from Prochlorococcus marinus (strain MIT 9303).